A 117-amino-acid polypeptide reads, in one-letter code: Large ribosomal subunit protein uL18 (117 aa).

The protein belongs to the universal ribosomal protein uL18 family. In terms of assembly, part of the 50S ribosomal subunit; part of the 5S rRNA/L5/L18/L25 subcomplex. Contacts the 5S and 23S rRNAs.

This is one of the proteins that bind and probably mediate the attachment of the 5S RNA into the large ribosomal subunit, where it forms part of the central protuberance. In Serratia proteamaculans (strain 568), this protein is Large ribosomal subunit protein uL18.